A 583-amino-acid polypeptide reads, in one-letter code: uncharacterized protein (583 aa).

Over residues 1–38 (MGQGESIPSRQIQRDASMQAVSSESENINDSDRQNSGF) the composition is skewed to polar residues. Disordered regions lie at residues 1 to 39 (MGQGESIPSRQIQRDASMQAVSSESENINDSDRQNSGFS), 53 to 124 (GLRR…AIPQ), 156 to 197 (TQNN…TAIG), and 362 to 452 (NSGS…QTDH). A compositionally biased stretch (basic and acidic residues) spans 70-80 (GNRDRTTERSA). A compositionally biased stretch (low complexity) spans 88–102 (SLLNRNSPSLRSLSP). 4 stretches are compositionally biased toward polar residues: residues 156–165 (TQNNQSTLAS), 172–191 (VSSSGGQEMQDHGSVNNLES), 384–408 (LISSLVNSQNQTTSVSDNTGPNENV), and 420–452 (ASTATDVNGISDNNGSSTQQAPETRNNNSQTDH). The RING-type zinc-finger motif lies at 525-568 (CLVCLSNFELNDECRRLKQCNHFFHRECIDQWLTSSQNSCPLCR). At Ser-580 the chain carries Phosphoserine.

Its subcellular location is the membrane. This is an uncharacterized protein from Schizosaccharomyces pombe (strain 972 / ATCC 24843) (Fission yeast).